Consider the following 199-residue polypeptide: Thymidine kinase (199 aa).

ATP contacts are provided by residues 9 to 16 (GAMSSGKT) and 93 to 96 (DEAQ). The Proton acceptor role is filled by glutamate 94. 4 residues coordinate Zn(2+): cysteine 151, cysteine 154, cysteine 188, and histidine 191.

Belongs to the thymidine kinase family. As to quaternary structure, homotetramer.

It is found in the cytoplasm. The enzyme catalyses thymidine + ATP = dTMP + ADP + H(+). This Lactobacillus acidophilus (strain ATCC 700396 / NCK56 / N2 / NCFM) protein is Thymidine kinase.